The following is a 227-amino-acid chain: UPF0758 protein Pcar_0065 (227 aa).

The region spanning 105 to 227 is the MPN domain; it reads RYTSPQAVFA…YVSLADRGVL (123 aa). Residues histidine 176, histidine 178, and aspartate 189 each contribute to the Zn(2+) site. The JAMM motif motif lies at 176-189; sequence HNHPSGDPSPSRED.

Belongs to the UPF0758 family.

This chain is UPF0758 protein Pcar_0065, found in Syntrophotalea carbinolica (strain DSM 2380 / NBRC 103641 / GraBd1) (Pelobacter carbinolicus).